The chain runs to 336 residues: UDP-galactose transporter 1 (336 aa).

9 helical membrane-spanning segments follow: residues 11-31 (LAIL…KWIF), 38-58 (FPLS…YIVI), 83-103 (FVFC…PVSF), 131-151 (IWAS…TELS), 154-174 (MFGF…TILA), 193-213 (APFA…SGIL), 227-247 (IIIL…FYVI), 254-274 (TFNV…WLIF), and 278-298 (ISYM…FYGY).

This sequence belongs to the TPT transporter family. TPT (TC 2.A.7.9) subfamily.

The protein resides in the membrane. Its function is as follows. Nucleotide sugar transporter that specifically transports UDP-galactose. The protein is UDP-galactose transporter 1 of Arabidopsis thaliana (Mouse-ear cress).